Consider the following 753-residue polypeptide: Probable TonB-dependent siderophore receptor PiuA (753 aa).

The first 35 residues, 1 to 35 (MSRQSTDTAVSSQRLLASAIGVAITAIAAPQAAQA), serve as a signal peptide directing secretion. The region spanning 79-185 (PLLDTPKTVT…TGGSLNLISK (107 aa)) is the TBDR plug domain. The TBDR beta-barrel domain maps to 190–753 (DNFTDAGFTW…TALLGVNFHF (564 aa)). A disulfide bond links C420 and C430.

It belongs to the TonB-dependent receptor family.

It is found in the cell outer membrane. Its function is as follows. Involved in the initial step of iron uptake by binding iron chelating siderophores, thereby allowing extraction of iron from the environment. Probably involved in the transport of siderophores, including host catecholamines such as dopamine. The polypeptide is Probable TonB-dependent siderophore receptor PiuA (Pseudomonas aeruginosa (strain ATCC 15692 / DSM 22644 / CIP 104116 / JCM 14847 / LMG 12228 / 1C / PRS 101 / PAO1)).